We begin with the raw amino-acid sequence, 2230 residues long: Golgin subfamily A member 4 (2230 aa).

A disordered region spans residues M1–K64. S10 bears the Phosphoserine mark. The span at E12–S41 shows a compositional bias: low complexity. T39 is modified (phosphothreonine). Residues S41, S71, S78, and S89 each carry the phosphoserine modification. The segment covering S87–L107 has biased composition (basic and acidic residues). The tract at residues S87–L127 is disordered. The segment at S133–K203 is interaction with MACF1. Positions S133–Y2185 form a coiled coil. The residue at position 266 (S266) is a Phosphoserine. N-linked (GlcNAc...) asparagine glycosylation is found at N585 and N1612. Residues L2168–R2215 form the GRIP domain. T2223 is modified (phosphothreonine).

In terms of assembly, homodimer. Interacts with RAB6A. Interacts with GTP-bound ARL1 and ARL3. Interacts with MACF1. Directly interacts with TBC1D23. Interacts with FAM91A1; this interaction may be mediated by TBC1D23.

It is found in the cytoplasm. The protein localises to the golgi apparatus membrane. The protein resides in the golgi apparatus. Its subcellular location is the trans-Golgi network membrane. Functionally, involved in vesicular trafficking at the Golgi apparatus level. May play a role in delivery of transport vesicles containing GPI-linked proteins from the trans-Golgi network through its interaction with MACF1. Involved in endosome-to-Golgi trafficking. The protein is Golgin subfamily A member 4 (GOLGA4) of Homo sapiens (Human).